The following is a 544-amino-acid chain: Tyrosine-protein kinase Yes (544 aa).

G2 carries N-myristoyl glycine lipidation. Residues 92–153 (GGVTFFVALY…PSNYVAPADS (62 aa)) enclose the SH3 domain. Residues 159 to 256 (WYFGKLSRKD…GLCYKLTTVC (98 aa)) form the SH2 domain. Residues 278–531 (LRLDVRLGQG…YIQSFLEDYF (254 aa)) form the Protein kinase domain. ATP-binding positions include 284-292 (LGQGCFGEV) and K306. The active-site Proton acceptor is D397. At Y427 the chain carries Phosphotyrosine; by autocatalysis.

It belongs to the protein kinase superfamily. Tyr protein kinase family. SRC subfamily.

The enzyme catalyses L-tyrosyl-[protein] + ATP = O-phospho-L-tyrosyl-[protein] + ADP + H(+). In Xiphophorus hellerii (Green swordtail), this protein is Tyrosine-protein kinase Yes (yes).